A 941-amino-acid polypeptide reads, in one-letter code: Isoleucine--tRNA ligase (941 aa).

The 'HIGH' region signature appears at 59-69 (PYANGNIHIGH). L-isoleucyl-5'-AMP is bound at residue glutamate 562. A 'KMSKS' region motif is present at residues 603-607 (KMSKS). Lysine 606 lines the ATP pocket. Residues cysteine 904, cysteine 907, cysteine 924, and cysteine 927 each coordinate Zn(2+).

This sequence belongs to the class-I aminoacyl-tRNA synthetase family. IleS type 1 subfamily. Monomer. Zn(2+) serves as cofactor.

It localises to the cytoplasm. The catalysed reaction is tRNA(Ile) + L-isoleucine + ATP = L-isoleucyl-tRNA(Ile) + AMP + diphosphate. Functionally, catalyzes the attachment of isoleucine to tRNA(Ile). As IleRS can inadvertently accommodate and process structurally similar amino acids such as valine, to avoid such errors it has two additional distinct tRNA(Ile)-dependent editing activities. One activity is designated as 'pretransfer' editing and involves the hydrolysis of activated Val-AMP. The other activity is designated 'posttransfer' editing and involves deacylation of mischarged Val-tRNA(Ile). The protein is Isoleucine--tRNA ligase of Haemophilus influenzae (strain PittGG).